We begin with the raw amino-acid sequence, 142 residues long: Large ribosomal subunit protein uL13 (142 aa).

This sequence belongs to the universal ribosomal protein uL13 family. As to quaternary structure, part of the 50S ribosomal subunit.

Functionally, this protein is one of the early assembly proteins of the 50S ribosomal subunit, although it is not seen to bind rRNA by itself. It is important during the early stages of 50S assembly. This chain is Large ribosomal subunit protein uL13, found in Idiomarina loihiensis (strain ATCC BAA-735 / DSM 15497 / L2-TR).